A 209-amino-acid polypeptide reads, in one-letter code: ATP-dependent Clp protease proteolytic subunit (209 aa).

Serine 107 acts as the Nucleophile in catalysis. Residue histidine 132 is part of the active site.

This sequence belongs to the peptidase S14 family. Fourteen ClpP subunits assemble into 2 heptameric rings which stack back to back to give a disk-like structure with a central cavity, resembling the structure of eukaryotic proteasomes.

It localises to the cytoplasm. The enzyme catalyses Hydrolysis of proteins to small peptides in the presence of ATP and magnesium. alpha-casein is the usual test substrate. In the absence of ATP, only oligopeptides shorter than five residues are hydrolyzed (such as succinyl-Leu-Tyr-|-NHMec, and Leu-Tyr-Leu-|-Tyr-Trp, in which cleavage of the -Tyr-|-Leu- and -Tyr-|-Trp bonds also occurs).. Cleaves peptides in various proteins in a process that requires ATP hydrolysis. Has a chymotrypsin-like activity. Plays a major role in the degradation of misfolded proteins. This is ATP-dependent Clp protease proteolytic subunit from Ruegeria pomeroyi (strain ATCC 700808 / DSM 15171 / DSS-3) (Silicibacter pomeroyi).